A 222-amino-acid chain; its full sequence is Holliday junction branch migration complex subunit RuvA (222 aa).

The segment at 1–67 (MISWLNGLKI…EDGSQLIGFL (67 aa)) is domain I. Residues 68–146 (NKLERDLFRK…DLIGSSLKKT (79 aa)) are domain II. The flexible linker stretch occupies residues 147–155 (NNHLELEYE). Residues 155–222 (ETNVADEVRS…TLIRINTESG (68 aa)) are domain III.

Belongs to the RuvA family. As to quaternary structure, homotetramer. Forms an RuvA(8)-RuvB(12)-Holliday junction (HJ) complex. HJ DNA is sandwiched between 2 RuvA tetramers; dsDNA enters through RuvA and exits via RuvB. An RuvB hexamer assembles on each DNA strand where it exits the tetramer. Each RuvB hexamer is contacted by two RuvA subunits (via domain III) on 2 adjacent RuvB subunits; this complex drives branch migration. In the full resolvosome a probable DNA-RuvA(4)-RuvB(12)-RuvC(2) complex forms which resolves the HJ.

It is found in the cytoplasm. The RuvA-RuvB-RuvC complex processes Holliday junction (HJ) DNA during genetic recombination and DNA repair, while the RuvA-RuvB complex plays an important role in the rescue of blocked DNA replication forks via replication fork reversal (RFR). RuvA specifically binds to HJ cruciform DNA, conferring on it an open structure. The RuvB hexamer acts as an ATP-dependent pump, pulling dsDNA into and through the RuvAB complex. HJ branch migration allows RuvC to scan DNA until it finds its consensus sequence, where it cleaves and resolves the cruciform DNA. The polypeptide is Holliday junction branch migration complex subunit RuvA (Prochlorococcus marinus (strain SARG / CCMP1375 / SS120)).